Consider the following 296-residue polypeptide: Protease HtpX homolog (296 aa).

Transmembrane regions (helical) follow at residues 7–27 and 29–49; these read TVLL…LVAG and QGMI…YFFS. His131 is a binding site for Zn(2+). Residue Glu132 is part of the active site. Residue His135 participates in Zn(2+) binding. 2 consecutive transmembrane segments (helical) span residues 141 to 161 and 178 to 198; these read ILIS…ANMA and IASI…ATLI. Glu207 provides a ligand contact to Zn(2+).

This sequence belongs to the peptidase M48B family. It depends on Zn(2+) as a cofactor.

The protein resides in the cell inner membrane. The sequence is that of Protease HtpX homolog from Sulfurihydrogenibium sp. (strain YO3AOP1).